A 215-amino-acid polypeptide reads, in one-letter code: Nascent polypeptide-associated complex subunit alpha-2 (215 aa).

Positions 1 to 51 (MPGEATETVPATEQELPQSQAETGSGTASDSGESVPGIEEQDSTQTTTQKA) are disordered. The segment covering 9–32 (VPATEQELPQSQAETGSGTASDSG) has biased composition (polar residues). Phosphoserine is present on residues Ser-43 and Ser-132. Residues 70 to 135 (SRSEKRARKA…AKIQDLSQQA (66 aa)) form the NAC-A/B domain. Lys-142 carries the post-translational modification N6-acetyllysine; alternate. Lys-142 participates in a covalent cross-link: Glycyl lysine isopeptide (Lys-Gly) (interchain with G-Cter in SUMO2); alternate. Position 161 is a phosphothreonine (Thr-161). Residues Ser-166, Ser-186, Ser-191, and Ser-203 each carry the phosphoserine modification. A UBA domain is found at 176-213 (VEVKDVKLVMSQANVSRAKAVRALKNNSNDIVNAIMEL). Thr-214 is subject to Phosphothreonine.

It belongs to the NAC-alpha family. As to quaternary structure, part of the nascent polypeptide-associated complex (NAC), consisting of NACA and BTF3. NAC associates with ribosomes through the BTF3 subunit. Both subunits can contact nascent polypeptide chains. Expressed specifically in testis and skeletal muscle.

It is found in the cytoplasm. The protein localises to the nucleus. In terms of biological role, prevents inappropriate targeting of non-secretory polypeptides to the endoplasmic reticulum (ER). Binds to nascent polypeptide chains as they emerge from the ribosome and blocks their interaction with the signal recognition particle (SRP), which normally targets nascent secretory peptides to the ER. Also reduces the inherent affinity of ribosomes for protein translocation sites in the ER membrane (M sites). This chain is Nascent polypeptide-associated complex subunit alpha-2 (NACA2), found in Homo sapiens (Human).